The primary structure comprises 35 residues: U1-theraphotoxin-Hhn1a (35 aa).

Disulfide bonds link Cys-2–Cys-16, Cys-9–Cys-21, and Cys-15–Cys-28.

This sequence belongs to the neurotoxin 10 (Hwtx-1) family. 24 (Hwtx-6) subfamily. Expressed by the venom gland.

Its subcellular location is the secreted. Functionally, gating-modifier toxin that dose-dependently inhibits inactivation of voltage-gated sodium channels and reduces the peak of sodium current in cockroach DUM neurons. In vivo, reversibly paralyzes cockroaches for several hours, paralyzes rat after intracerebroventricular injection and blocks the neuromuscular transmission of the isolated rat phrenic nerve-diaphragm preparation. This chain is U1-theraphotoxin-Hhn1a, found in Cyriopagopus hainanus (Chinese bird spider).